Here is a 179-residue protein sequence, read N- to C-terminus: Alpha-tubulin N-acetyltransferase (179 aa).

One can recognise an N-acetyltransferase domain in the interval M1–F175. Acetyl-CoA contacts are provided by residues F109–L122 and S145–K154.

Belongs to the acetyltransferase ATAT1 family.

The enzyme catalyses L-lysyl-[alpha-tubulin] + acetyl-CoA = N(6)-acetyl-L-lysyl-[alpha-tubulin] + CoA + H(+). Functionally, specifically acetylates 'Lys-40' in alpha-tubulin on the lumenal side of microtubules. Promotes microtubule destabilization and accelerates microtubule dynamics; this activity may be independent of acetylation activity. Acetylates alpha-tubulin with a slow enzymatic rate, due to a catalytic site that is not optimized for acetyl transfer. Enters the microtubule through each end and diffuses quickly throughout the lumen of microtubules. Acetylates only long/old microtubules because of its slow acetylation rate since it does not have time to act on dynamically unstable microtubules before the enzyme is released. The chain is Alpha-tubulin N-acetyltransferase from Phytophthora infestans (strain T30-4) (Potato late blight agent).